Here is a 341-residue protein sequence, read N- to C-terminus: MLTNASQVLLRNSDLVKDQSVLVLNYESDHLPKELLATASSVCGLALDYHHHLMMQPYAAANLTLHFGHQLPTDECFDTVIVYFPKAKALAPYLFNLAAKHLKPQGQLIVAGENKGGIKSLPKQLPSYFDKAFKVDNARHCILFTSELNSPAPELKLKDWLSRYQLDTPQGQVTICNLVGVFSEKKLDEGTQLLLANLPKMSGNVLDFGCGAGVITAALLKAQPDLKLECVDINAMALASCELTLEANGFTAKVFASDGLAQTSQRYDGIISNPPFHDGLASTTNIATNFVKDSANNLKAGGLFHIVANRHLPYSDTIAEHFGSVNVLAENNKYKIYSNVK.

This sequence belongs to the methyltransferase superfamily. RsmC family. As to quaternary structure, monomer.

The protein localises to the cytoplasm. It carries out the reaction guanosine(1207) in 16S rRNA + S-adenosyl-L-methionine = N(2)-methylguanosine(1207) in 16S rRNA + S-adenosyl-L-homocysteine + H(+). In terms of biological role, specifically methylates the guanine in position 1207 of 16S rRNA in the 30S particle. The polypeptide is Ribosomal RNA small subunit methyltransferase C (Shewanella pealeana (strain ATCC 700345 / ANG-SQ1)).